The chain runs to 29 residues: Thrombin-like enzyme collinein-2 (29 aa).

Monomer. Expressed by the venom gland.

It is found in the secreted. Thrombin-like snake venom serine protease. This is Thrombin-like enzyme collinein-2 from Crotalus durissus collilineatus (Brazilian rattlesnake).